A 206-amino-acid chain; its full sequence is Superoxide dismutase [Mn] (206 aa).

Residues H27, H82, D168, and H172 each coordinate Mn(2+).

The protein belongs to the iron/manganese superoxide dismutase family. In terms of assembly, homodimer. The cofactor is Mn(2+).

The catalysed reaction is 2 superoxide + 2 H(+) = H2O2 + O2. In terms of biological role, destroys superoxide anion radicals which are normally produced within the cells and which are toxic to biological systems. The protein is Superoxide dismutase [Mn] (sodA) of Salmonella typhi.